A 144-amino-acid polypeptide reads, in one-letter code: Large ribosomal subunit protein uL16 (144 aa).

It belongs to the universal ribosomal protein uL16 family. Part of the 50S ribosomal subunit.

In terms of biological role, binds 23S rRNA and is also seen to make contacts with the A and possibly P site tRNAs. This is Large ribosomal subunit protein uL16 from Listeria innocua serovar 6a (strain ATCC BAA-680 / CLIP 11262).